We begin with the raw amino-acid sequence, 100 residues long: Large ribosomal subunit protein uL23 (100 aa).

This sequence belongs to the universal ribosomal protein uL23 family. Part of the 50S ribosomal subunit. Contacts protein L29, and trigger factor when it is bound to the ribosome.

Its function is as follows. One of the early assembly proteins it binds 23S rRNA. One of the proteins that surrounds the polypeptide exit tunnel on the outside of the ribosome. Forms the main docking site for trigger factor binding to the ribosome. The chain is Large ribosomal subunit protein uL23 from Salmonella paratyphi A (strain ATCC 9150 / SARB42).